Here is a 377-residue protein sequence, read N- to C-terminus: Chaperone protein DnaJ (377 aa).

A J domain is found at 4-69 (DYYEVLGVSK…EKRARYDQMG (66 aa)). The CR-type zinc finger occupies 131 to 213 (GTEKEIQVPR…CSGKGTTRKV (83 aa)). Residues C144, C147, C161, C164, C187, C190, C201, and C204 each coordinate Zn(2+). CXXCXGXG motif repeat units follow at residues 144–151 (CTECHGSG), 161–168 (CSQCHGTG), 187–194 (CPACNGSG), and 201–208 (CKECSGKG).

It belongs to the DnaJ family. In terms of assembly, homodimer. The cofactor is Zn(2+).

It localises to the cytoplasm. Functionally, participates actively in the response to hyperosmotic and heat shock by preventing the aggregation of stress-denatured proteins and by disaggregating proteins, also in an autonomous, DnaK-independent fashion. Unfolded proteins bind initially to DnaJ; upon interaction with the DnaJ-bound protein, DnaK hydrolyzes its bound ATP, resulting in the formation of a stable complex. GrpE releases ADP from DnaK; ATP binding to DnaK triggers the release of the substrate protein, thus completing the reaction cycle. Several rounds of ATP-dependent interactions between DnaJ, DnaK and GrpE are required for fully efficient folding. Also involved, together with DnaK and GrpE, in the DNA replication of plasmids through activation of initiation proteins. The protein is Chaperone protein DnaJ of Desulfitobacterium hafniense (strain DSM 10664 / DCB-2).